The following is a 444-amino-acid chain: Tubulin beta-4A chain (444 aa).

The MREI motif motif lies at Met-1–Ile-4. The GTP site is built by Gln-11, Glu-69, Ser-138, Gly-142, Thr-143, and Gly-144. Position 69 (Glu-69) interacts with Mg(2+). Ser-172 bears the Phosphoserine; by CDK1 mark. GTP-binding residues include Asn-204 and Asn-226. A 5-glutamyl polyglutamate modification is found at Glu-436.

This sequence belongs to the tubulin family. As to quaternary structure, dimer of alpha and beta chains. A typical microtubule is a hollow water-filled tube with an outer diameter of 25 nm and an inner diameter of 15 nM. Alpha-beta heterodimers associate head-to-tail to form protofilaments running lengthwise along the microtubule wall with the beta-tubulin subunit facing the microtubule plus end conferring a structural polarity. Microtubules usually have 13 protofilaments but different protofilament numbers can be found in some organisms and specialized cells. Requires Mg(2+) as cofactor. In terms of processing, some glutamate residues at the C-terminus are polyglycylated, resulting in polyglycine chains on the gamma-carboxyl group. Glycylation is mainly limited to tubulin incorporated into axonemes (cilia and flagella) whereas glutamylation is prevalent in neuronal cells, centrioles, axonemes, and the mitotic spindle. Both modifications can coexist on the same protein on adjacent residues, and lowering polyglycylation levels increases polyglutamylation, and reciprocally. Cilia and flagella glycylation is required for their stability and maintenance. Flagella glycylation controls sperm motility. Post-translationally, some glutamate residues at the C-terminus are polyglutamylated, resulting in polyglutamate chains on the gamma-carboxyl group. Polyglutamylation plays a key role in microtubule severing by spastin (SPAST). SPAST preferentially recognizes and acts on microtubules decorated with short polyglutamate tails: severing activity by SPAST increases as the number of glutamates per tubulin rises from one to eight, but decreases beyond this glutamylation threshold. Glutamylation is also involved in cilia motility. Phosphorylated on Ser-172 by CDK1 during the cell cycle, from metaphase to telophase, but not in interphase. This phosphorylation inhibits tubulin incorporation into microtubules.

The protein localises to the cytoplasm. The protein resides in the cytoskeleton. Functionally, tubulin is the major constituent of microtubules, a cylinder consisting of laterally associated linear protofilaments composed of alpha- and beta-tubulin heterodimers. Microtubules grow by the addition of GTP-tubulin dimers to the microtubule end, where a stabilizing cap forms. Below the cap, tubulin dimers are in GDP-bound state, owing to GTPase activity of alpha-tubulin. The chain is Tubulin beta-4A chain (TUBB4A) from Bos taurus (Bovine).